A 351-amino-acid chain; its full sequence is Minor outer capsid protein P9 (351 aa).

A disordered region spans residues G246–D330. Positions M285–S298 are enriched in basic and acidic residues. Over residues L315–M324 the composition is skewed to acidic residues.

The protein belongs to the phytoreovirus minor outer capsid protein P9 family.

It localises to the virion. The protein resides in the host cytoplasm. In terms of biological role, minor outer capsid protein. The chain is Minor outer capsid protein P9 from Alopecurus aequalis (Barnyard grass).